A 297-amino-acid chain; its full sequence is Alpha-tubulin N-acetyltransferase 1 (297 aa).

An N-acetyltransferase domain is found at 1–186 (MEFDFDVHKI…NNFVVFDGFF (186 aa)). Acetyl-CoA is bound by residues 120 to 133 (FYIH…GFGK) and 156 to 165 (SEKFLSFLRK). The disordered stretch occupies residues 269-297 (LHRTANSEQEDHSQRRRTSSLNRPQSIHH). Residues 287–297 (SSLNRPQSIHH) show a composition bias toward polar residues.

This sequence belongs to the acetyltransferase ATAT1 family.

Its subcellular location is the cytoplasm. The protein resides in the membrane. It localises to the clathrin-coated pit. It is found in the cell junction. The protein localises to the focal adhesion. Its subcellular location is the cell projection. The protein resides in the axon. It localises to the cytoskeleton. It is found in the spindle. The catalysed reaction is L-lysyl-[alpha-tubulin] + acetyl-CoA = N(6)-acetyl-L-lysyl-[alpha-tubulin] + CoA + H(+). Its function is as follows. Specifically acetylates 'Lys-40' in alpha-tubulin on the lumenal side of microtubules. Promotes microtubule destabilization and accelerates microtubule dynamics; this activity may be independent of acetylation activity. Acetylates alpha-tubulin with a slow enzymatic rate, due to a catalytic site that is not optimized for acetyl transfer. Enters the microtubule through each end and diffuses quickly throughout the lumen of microtubules. Acetylates only long/old microtubules because of its slow acetylation rate since it does not have time to act on dynamically unstable microtubules before the enzyme is released. May be involved in neuron development. In Xenopus tropicalis (Western clawed frog), this protein is Alpha-tubulin N-acetyltransferase 1.